A 529-amino-acid chain; its full sequence is Peptide chain release factor 3 (529 aa).

The 270-residue stretch at 11–280 (AKRRTFAIIS…GLVEWAPAPM (270 aa)) folds into the tr-type G domain. GTP is bound by residues 20 to 27 (SHPDAGKT), 88 to 92 (DTPGH), and 142 to 145 (NKLD).

It belongs to the TRAFAC class translation factor GTPase superfamily. Classic translation factor GTPase family. PrfC subfamily.

It is found in the cytoplasm. Increases the formation of ribosomal termination complexes and stimulates activities of RF-1 and RF-2. It binds guanine nucleotides and has strong preference for UGA stop codons. It may interact directly with the ribosome. The stimulation of RF-1 and RF-2 is significantly reduced by GTP and GDP, but not by GMP. This Klebsiella pneumoniae subsp. pneumoniae (strain ATCC 700721 / MGH 78578) protein is Peptide chain release factor 3.